A 434-amino-acid polypeptide reads, in one-letter code: CinA-like protein (434 aa).

Belongs to the CinA family.

This is CinA-like protein from Mycobacterium avium (strain 104).